The sequence spans 566 residues: Hemocyanin B chain (566 aa).

Cysteine 82 and cysteine 87 form a disulfide bridge. Cu cation is bound by residues histidine 183, histidine 187, histidine 213, histidine 309, histidine 313, and histidine 347.

The protein belongs to the tyrosinase family. Hemocyanin subfamily. In terms of tissue distribution, hemolymph.

The protein resides in the secreted. It localises to the extracellular space. In terms of biological role, hemocyanins are copper-containing oxygen carriers occurring freely dissolved in the hemolymph of many mollusks and arthropods. This Astacus leptodactylus (Turkish narrow-clawed crayfish) protein is Hemocyanin B chain.